The primary structure comprises 124 residues: MPTIQQLVRKGRKDKATKTKTPALKGSPQRRGVCTRVYTTTPRKPNSALRKVARVKLSSQMEVTAYIPGVGHNLQEHSIVLVRGGRVADLPGVRYKIVRGALDTQGVRGRQQARSRYGAKKEKK.

A disordered region spans residues 1 to 32 (MPTIQQLVRKGRKDKATKTKTPALKGSPQRRG). Aspartate 89 carries the 3-methylthioaspartic acid modification. The interval 105–124 (QGVRGRQQARSRYGAKKEKK) is disordered. The span at 111–124 (QQARSRYGAKKEKK) shows a compositional bias: basic residues.

Belongs to the universal ribosomal protein uS12 family. In terms of assembly, part of the 30S ribosomal subunit. Contacts proteins S8 and S17. May interact with IF1 in the 30S initiation complex.

With S4 and S5 plays an important role in translational accuracy. In terms of biological role, interacts with and stabilizes bases of the 16S rRNA that are involved in tRNA selection in the A site and with the mRNA backbone. Located at the interface of the 30S and 50S subunits, it traverses the body of the 30S subunit contacting proteins on the other side and probably holding the rRNA structure together. The combined cluster of proteins S8, S12 and S17 appears to hold together the shoulder and platform of the 30S subunit. The sequence is that of Small ribosomal subunit protein uS12 from Beutenbergia cavernae (strain ATCC BAA-8 / DSM 12333 / CCUG 43141 / JCM 11478 / NBRC 16432 / NCIMB 13614 / HKI 0122).